Consider the following 455-residue polypeptide: Ribosome biogenesis protein NOP53 (455 aa).

Positions 1–15 are enriched in polar residues; the sequence is MAPTNLTKKPSQYKQ. Positions 1 to 25 are disordered; sequence MAPTNLTKKPSQYKQSSRKGKKAWR. Residues 16–25 are compositionally biased toward basic residues; it reads SSRKGKKAWR. Residue Ser31 is modified to Phosphoserine. Positions 264-333 are disordered; sequence HLMETLDDNE…RNKAKRHEEK (70 aa). Residues 268–294 are compositionally biased toward acidic residues; that stretch reads TLDDNEEEESSSNEEEEEEEEENENEN. The span at 314–328 shows a compositional bias: basic residues; that stretch reads VKNKKKTKYQRNKAK.

It belongs to the NOP53 family. Interacts with CBF5, FPR3, FPR4, NOP2, PIH1, RRN3, RRP6 and PAP2. Interacts with pre-60S ribosomal particles.

Its subcellular location is the nucleus. The protein resides in the nucleolus. It is found in the nucleoplasm. Its function is as follows. Late-acting factor in the nuclear maturation of 60S ribosomal subunits, which is required for normal acquisition of export competence. Required for the export of the large subunit. Acts to stimulate the RNase activity of the exosome complex, and may recruit the exosome to 7S pre-rRNA for processing. Associates with numerous RNAs including the 27S and 7S pre-rRNAs and the box H/ACA snoRNA snR37. Also interacts (via N-terminal region) with the mature 25S rRNA and the mature 5.8S rRNA. The sequence is that of Ribosome biogenesis protein NOP53 from Saccharomyces cerevisiae (strain ATCC 204508 / S288c) (Baker's yeast).